A 486-amino-acid polypeptide reads, in one-letter code: Glycogen synthase (486 aa).

Residue lysine 20 coordinates ADP-alpha-D-glucose.

It belongs to the glycosyltransferase 1 family. Bacterial/plant glycogen synthase subfamily.

The enzyme catalyses [(1-&gt;4)-alpha-D-glucosyl](n) + ADP-alpha-D-glucose = [(1-&gt;4)-alpha-D-glucosyl](n+1) + ADP + H(+). Its pathway is glycan biosynthesis; glycogen biosynthesis. In terms of biological role, synthesizes alpha-1,4-glucan chains using ADP-glucose. In Aeromonas hydrophila subsp. hydrophila (strain ATCC 7966 / DSM 30187 / BCRC 13018 / CCUG 14551 / JCM 1027 / KCTC 2358 / NCIMB 9240 / NCTC 8049), this protein is Glycogen synthase.